The sequence spans 284 residues: Neutral protease 2 homolog AFLA_119780 (284 aa).

Disulfide bonds link Cys113–Cys185 and Cys192–Cys210. His235 contributes to the Zn(2+) binding site. Glu236 is an active-site residue. Zn(2+) contacts are provided by His239 and Asp250.

Belongs to the peptidase M35 family. It depends on Zn(2+) as a cofactor.

It is found in the secreted. The enzyme catalyses Preferential cleavage of bonds with hydrophobic residues in P1'. Also 3-Asn-|-Gln-4 and 8-Gly-|-Ser-9 bonds in insulin B chain.. Secreted metalloproteinase that allows assimilation of proteinaceous substrates. Shows high activities on basic nuclear substrates such as histone and protamine. This Aspergillus flavus (strain ATCC 200026 / FGSC A1120 / IAM 13836 / NRRL 3357 / JCM 12722 / SRRC 167) protein is Neutral protease 2 homolog AFLA_119780.